The following is a 185-amino-acid chain: Ribosomal RNA small subunit methyltransferase G (185 aa).

Residues G59, F64, 110 to 111 (IQ), and R127 each bind S-adenosyl-L-methionine.

This sequence belongs to the methyltransferase superfamily. RNA methyltransferase RsmG family.

The protein localises to the cytoplasm. The enzyme catalyses guanosine(527) in 16S rRNA + S-adenosyl-L-methionine = N(7)-methylguanosine(527) in 16S rRNA + S-adenosyl-L-homocysteine. Its function is as follows. Specifically methylates the N7 position of guanine in position 527 of 16S rRNA. This chain is Ribosomal RNA small subunit methyltransferase G, found in Helicobacter hepaticus (strain ATCC 51449 / 3B1).